The sequence spans 861 residues: Leucine--tRNA ligase (861 aa).

Positions proline 42 to histidine 52 match the 'HIGH' region motif. The 'KMSKS' region signature appears at lysine 619 to serine 623. Residue lysine 622 participates in ATP binding.

Belongs to the class-I aminoacyl-tRNA synthetase family.

The protein resides in the cytoplasm. The catalysed reaction is tRNA(Leu) + L-leucine + ATP = L-leucyl-tRNA(Leu) + AMP + diphosphate. This Haemophilus influenzae (strain PittGG) protein is Leucine--tRNA ligase.